The sequence spans 142 residues: Large ribosomal subunit protein uL11 (142 aa).

It belongs to the universal ribosomal protein uL11 family. In terms of assembly, part of the ribosomal stalk of the 50S ribosomal subunit. Interacts with L10 and the large rRNA to form the base of the stalk. L10 forms an elongated spine to which L12 dimers bind in a sequential fashion forming a multimeric L10(L12)X complex. In terms of processing, one or more lysine residues are methylated.

Its function is as follows. Forms part of the ribosomal stalk which helps the ribosome interact with GTP-bound translation factors. This chain is Large ribosomal subunit protein uL11, found in Shewanella frigidimarina (strain NCIMB 400).